An 802-amino-acid polypeptide reads, in one-letter code: Leucine--tRNA ligase (802 aa).

Positions 40 to 51 (PYPSGAGLHVGH) match the 'HIGH' region motif. The 'KMSKS' region signature appears at 576–580 (KMSKS). Lysine 579 provides a ligand contact to ATP.

Belongs to the class-I aminoacyl-tRNA synthetase family.

The protein resides in the cytoplasm. The catalysed reaction is tRNA(Leu) + L-leucine + ATP = L-leucyl-tRNA(Leu) + AMP + diphosphate. The sequence is that of Leucine--tRNA ligase from Bacillus cereus (strain ATCC 14579 / DSM 31 / CCUG 7414 / JCM 2152 / NBRC 15305 / NCIMB 9373 / NCTC 2599 / NRRL B-3711).